The chain runs to 251 residues: 3-deoxy-manno-octulosonate cytidylyltransferase (251 aa).

Belongs to the KdsB family.

It is found in the cytoplasm. It carries out the reaction 3-deoxy-alpha-D-manno-oct-2-ulosonate + CTP = CMP-3-deoxy-beta-D-manno-octulosonate + diphosphate. Its pathway is nucleotide-sugar biosynthesis; CMP-3-deoxy-D-manno-octulosonate biosynthesis; CMP-3-deoxy-D-manno-octulosonate from 3-deoxy-D-manno-octulosonate and CTP: step 1/1. It participates in bacterial outer membrane biogenesis; lipopolysaccharide biosynthesis. Activates KDO (a required 8-carbon sugar) for incorporation into bacterial lipopolysaccharide in Gram-negative bacteria. This Chromobacterium violaceum (strain ATCC 12472 / DSM 30191 / JCM 1249 / CCUG 213 / NBRC 12614 / NCIMB 9131 / NCTC 9757 / MK) protein is 3-deoxy-manno-octulosonate cytidylyltransferase.